The following is a 259-amino-acid chain: Small ribosomal subunit protein uS2 (259 aa).

The interval 232 to 259 (KAMEAEETKAAEKAVETEAKEETPQEAK) is disordered.

This sequence belongs to the universal ribosomal protein uS2 family.

In Maridesulfovibrio salexigens (strain ATCC 14822 / DSM 2638 / NCIMB 8403 / VKM B-1763) (Desulfovibrio salexigens), this protein is Small ribosomal subunit protein uS2.